We begin with the raw amino-acid sequence, 168 residues long: Plastocyanin B, chloroplastic (168 aa).

The N-terminal 69 residues, 1-69 (MAAVTSAAVS…SAMIASNAMA (69 aa)), are a transit peptide targeting the chloroplast. The Plastocyanin-like domain occupies 70–168 (VDVLLGADDG…AGMVGKVIVN (99 aa)). His106, Cys153, His156, and Met161 together coordinate Cu cation.

The protein belongs to the plastocyanin family. Cu(2+) serves as cofactor.

Its subcellular location is the plastid. It localises to the chloroplast thylakoid membrane. Its function is as follows. Participates in electron transfer between P700 and the cytochrome b6-f complex in photosystem I. The protein is Plastocyanin B, chloroplastic (PETE) of Populus nigra (Lombardy poplar).